Consider the following 291-residue polypeptide: Tetrahydromethanopterin:alpha-L-glutamate ligase (291 aa).

The region spanning 101-286 (SVFLELNNLP…IADKLLEKII (186 aa)) is the ATP-grasp domain. Residues K136, 175–187 (QEFI…EHRD), and R203 each bind ATP. The Mg(2+) site is built by D247, E259, and N261. Mn(2+) contacts are provided by D247, E259, and N261.

This sequence belongs to the RimK family. MptN subfamily. In terms of assembly, homodimer. Requires Mg(2+) as cofactor. It depends on Mn(2+) as a cofactor.

The enzyme catalyses 5,6,7,8-tetrahydromethanopterin + L-glutamate + ATP = 5,6,7,8-tetrahydrosarcinapterin + ADP + phosphate + H(+). Its pathway is cofactor biosynthesis; 5,6,7,8-tetrahydrosarcinapterin biosynthesis. Functionally, catalyzes the ATP or GTP-dependent addition of one L-glutamate molecule to tetrahydromethanopterin, producing tetrahydrosarcinapterin. In Methanocaldococcus jannaschii (strain ATCC 43067 / DSM 2661 / JAL-1 / JCM 10045 / NBRC 100440) (Methanococcus jannaschii), this protein is Tetrahydromethanopterin:alpha-L-glutamate ligase (mptN).